Here is a 299-residue protein sequence, read N- to C-terminus: Tyrosine recombinase XerD (299 aa).

Residues 3 to 88 form the Core-binding (CB) domain; it reads QQDNPLIEQF…AMRRLFQYLY (86 aa). A Tyr recombinase domain is found at 109–293; sequence RLPKDLSEAQ…ATERLRQLHQ (185 aa). Active-site residues include Arg-149, Lys-173, His-245, Arg-248, and His-271. Tyr-280 functions as the O-(3'-phospho-DNA)-tyrosine intermediate in the catalytic mechanism.

Belongs to the 'phage' integrase family. XerD subfamily. Forms a cyclic heterotetrameric complex composed of two molecules of XerC and two molecules of XerD, in which XerC interacts with XerD via its C-terminal region, XerD interacts with XerC via its C-terminal region and so on.

It is found in the cytoplasm. With respect to regulation, ftsK may regulate the catalytic switch between XerC and XerD in the heterotetrameric complex during the two steps of the recombination process. In terms of biological role, site-specific tyrosine recombinase, which acts by catalyzing the cutting and rejoining of the recombining DNA molecules. Binds cooperatively to specific DNA consensus sequences that are separated from XerC binding sites by a short central region, forming the heterotetrameric XerC-XerD complex that recombines DNA substrates. The complex is essential to convert dimers of the bacterial chromosome into monomers to permit their segregation at cell division. It also contributes to the segregational stability of plasmids. In the complex XerD specifically exchanges the bottom DNA strands. In Yersinia pestis, this protein is Tyrosine recombinase XerD.